Consider the following 267-residue polypeptide: MTNQNVLLNISGVKFVLRIPNAVNLSLINREYEAFNNAQAYRAGLNVETPVLDAKSGVKLTRYLENSNTLSQIQLNEQSCLSQVVNNLYRLHNSEFVFRNVFSVFDEFRQYFSLLENKSAFYQADSRMDKLSAVFWQFEEINKEVILRPCHNDLVPENMLLQDDRLFFIDWEYSGLNDPLFDIATIIEEAHLSKEAADFLLETYCNQTNKYHKTEFQIAHKRLKIHRFCQNVLWFLWTKVKEEHGENFGDYALKRLDAAFKLLEELP.

Belongs to the peptidase S49 family.

Mediates phase variation of the LPS epitopes. Phase variation of H.influenza LPS epitopes expressed by LicA is determined by a translational switch. The chain is Protein LicA (licA) from Haemophilus influenzae (strain ATCC 51907 / DSM 11121 / KW20 / Rd).